Reading from the N-terminus, the 179-residue chain is Acireductone dioxygenase (179 aa).

Residues histidine 88, histidine 90, glutamate 94, and histidine 133 each contribute to the Fe(2+) site. Ni(2+) contacts are provided by histidine 88, histidine 90, glutamate 94, and histidine 133.

This sequence belongs to the acireductone dioxygenase (ARD) family. In terms of assembly, monomer. Interacts with MMP14. Fe(2+) serves as cofactor. The cofactor is Ni(2+).

The protein localises to the cytoplasm. It is found in the nucleus. The protein resides in the cell membrane. The catalysed reaction is 1,2-dihydroxy-5-(methylsulfanyl)pent-1-en-3-one + O2 = 4-methylsulfanyl-2-oxobutanoate + formate + 2 H(+). It catalyses the reaction 1,2-dihydroxy-5-(methylsulfanyl)pent-1-en-3-one + O2 = 3-(methylsulfanyl)propanoate + CO + formate + 2 H(+). The protein operates within amino-acid biosynthesis; L-methionine biosynthesis via salvage pathway; L-methionine from S-methyl-5-thio-alpha-D-ribose 1-phosphate: step 5/6. Its function is as follows. Catalyzes 2 different reactions between oxygen and the acireductone 1,2-dihydroxy-3-keto-5-methylthiopentene (DHK-MTPene) depending upon the metal bound in the active site. Fe-containing acireductone dioxygenase (Fe-ARD) produces formate and 2-keto-4-methylthiobutyrate (KMTB), the alpha-ketoacid precursor of methionine in the methionine recycle pathway. Ni-containing acireductone dioxygenase (Ni-ARD) produces methylthiopropionate, carbon monoxide and formate, and does not lie on the methionine recycle pathway. In Xenopus laevis (African clawed frog), this protein is Acireductone dioxygenase (adi1).